Consider the following 640-residue polypeptide: Cytochrome P450 monooxygenase cyp1 (640 aa).

A glycan (N-linked (GlcNAc...) asparagine) is linked at Asn-71. A helical transmembrane segment spans residues Leu-120–Trp-139. Residue Asn-350 is glycosylated (N-linked (GlcNAc...) asparagine). Position 572 (Cys-572) interacts with heme.

This sequence belongs to the cytochrome P450 family. The cofactor is heme.

It is found in the membrane. The protein operates within secondary metabolite biosynthesis. Functionally, cytochrome P450 monooxygenase; part of the gene cluster that mediates the biosynthesis of the glycolipid biosurfactant ustilagic acid (UA). UA is a secreted cellobiose glycolipid that is toxic for many microorganisms and confers biocontrol activity to U.maydis. UA consists of 15,16-dihydroxypalmitic or 2,15,16-trihydroxypalmitic acid, which is O-glycosidically linked to cellobiose at its terminal hydroxyl group. In addition, the cellobiose moiety is acetylated and acylated with a short-chain hydroxy fatty acid. UA biosynthesis starts with omega-hydroxylation of palmitic acid catalyzed by the cytochrome P450 monooxygenase cyp1. Terminal hydroxylation of palmitic acid precedes subterminal hydroxylation catalyzed by the cytochrome P450 monooxygenase cyp2. Sequential glucosylation of the hydroxy fatty acid is probably catalyzed by the glycosyltransferase ugt1. The cellobiose lipid is further decorated by acetylation of the proximal glucose residue and by acylation with a short-chain beta-hydroxy fatty acid at the distal glucose residue. The acyltransferase uat1 may be a good candidate for catalyzing either acetylation or acylation of the cellobiose lipid. The fatty acid synthase fas2 may be involved in synthesis of the carbon backbone of the short-chain beta-hydroxy fatty acid esterified to the cellobiose disaccharide. The secreted UA consists of a mixture of both alpha-hydroxylated and non-hydroxylated glycolipids; therefore, alpha-hydroxylation of the long-chain fatty, catalyzed by the fatty acid hydroxylase ahd1, occurs late in UA biosynthesis and may be the last step before secretion. This is Cytochrome P450 monooxygenase cyp1 from Mycosarcoma maydis (Corn smut fungus).